A 320-amino-acid polypeptide reads, in one-letter code: Cytochrome f (320 aa).

A signal peptide spans 1 to 35 (MQTRNTFSWIREEITRSISVSLIIYIITWASISSA). 4 residues coordinate heme: Y36, C56, C59, and H60. Residues 286–305 (VQGLLFFLGSVVLAQIFLVL) traverse the membrane as a helical segment.

This sequence belongs to the cytochrome f family. The 4 large subunits of the cytochrome b6-f complex are cytochrome b6, subunit IV (17 kDa polypeptide, petD), cytochrome f and the Rieske protein, while the 4 small subunits are PetG, PetL, PetM and PetN. The complex functions as a dimer. Heme serves as cofactor.

The protein localises to the plastid. The protein resides in the chloroplast thylakoid membrane. In terms of biological role, component of the cytochrome b6-f complex, which mediates electron transfer between photosystem II (PSII) and photosystem I (PSI), cyclic electron flow around PSI, and state transitions. In Arabidopsis thaliana (Mouse-ear cress), this protein is Cytochrome f (petA).